We begin with the raw amino-acid sequence, 142 residues long: Ribosome-binding factor A (142 aa).

The tract at residues 120–142 (TLGEVQSESDQPTTYETTTVNKT) is disordered. The segment covering 123-142 (EVQSESDQPTTYETTTVNKT) has biased composition (polar residues).

This sequence belongs to the RbfA family. Monomer. Binds 30S ribosomal subunits, but not 50S ribosomal subunits or 70S ribosomes.

It localises to the cytoplasm. In terms of biological role, one of several proteins that assist in the late maturation steps of the functional core of the 30S ribosomal subunit. Associates with free 30S ribosomal subunits (but not with 30S subunits that are part of 70S ribosomes or polysomes). Required for efficient processing of 16S rRNA. May interact with the 5'-terminal helix region of 16S rRNA. The chain is Ribosome-binding factor A from Prochlorococcus marinus (strain MIT 9313).